A 415-amino-acid polypeptide reads, in one-letter code: Serine/threonine transporter SstT (415 aa).

A run of 9 helical transmembrane segments spans residues 21 to 41, 45 to 65, 83 to 103, 142 to 162, 193 to 213, 217 to 237, 299 to 319, 331 to 351, and 358 to 378; these read ILLG…AALA, LGTL…LMLV, ILFL…VLSV, ALLN…GLAF, LGIF…ALWG, LLMV…PLIV, MAGA…TLGI, VVAS…LLLI, and FGIS…IGVL.

This sequence belongs to the dicarboxylate/amino acid:cation symporter (DAACS) (TC 2.A.23) family.

Its subcellular location is the cell inner membrane. It carries out the reaction L-serine(in) + Na(+)(in) = L-serine(out) + Na(+)(out). The enzyme catalyses L-threonine(in) + Na(+)(in) = L-threonine(out) + Na(+)(out). Involved in the import of serine and threonine into the cell, with the concomitant import of sodium (symport system). In Pectobacterium carotovorum subsp. carotovorum (strain PC1), this protein is Serine/threonine transporter SstT.